A 235-amino-acid chain; its full sequence is Fibrillarin-like rRNA/tRNA 2'-O-methyltransferase (235 aa).

S-adenosyl-L-methionine is bound by residues 91 to 92 (TT), 110 to 111 (EF), 137 to 138 (DA), and 157 to 160 (DVAQ).

This sequence belongs to the methyltransferase superfamily. Fibrillarin family. Interacts with nop5. Component of box C/D small ribonucleoprotein (sRNP) particles that contain rpl7ae, FlpA and nop5, plus a guide RNA.

Involved in pre-rRNA and tRNA processing. Utilizes the methyl donor S-adenosyl-L-methionine to catalyze the site-specific 2'-hydroxyl methylation of ribose moieties in rRNA and tRNA. Site specificity is provided by a guide RNA that base pairs with the substrate. Methylation occurs at a characteristic distance from the sequence involved in base pairing with the guide RNA. The protein is Fibrillarin-like rRNA/tRNA 2'-O-methyltransferase of Pyrobaculum aerophilum (strain ATCC 51768 / DSM 7523 / JCM 9630 / CIP 104966 / NBRC 100827 / IM2).